Consider the following 183-residue polypeptide: Acidic proline-rich protein HP43A (183 aa).

An N-terminal signal peptide occupies residues 1–14 (MLVVLLTAALLAEH). Residues 22–183 (ISQLSEEEQQ…QGSEEQSTSL (162 aa)) form a disordered region. The span at 52–65 (SDEEGDDDGEEDGN) shows a compositional bias: acidic residues. 5 consecutive repeat copies span residues 81 to 100 (RPPK…QQQN), 101 to 120 (RPPK…QQQN), 121 to 140 (RPPK…QQQN), 141 to 160 (RPPK…QQQN), and 161 to 180 (RPPK…EEQS). Residues 86–183 (GNQQGPPQQE…QGSEEQSTSL (98 aa)) are compositionally biased toward low complexity.

The protein resides in the secreted. The sequence is that of Acidic proline-rich protein HP43A (H29) from Mesocricetus auratus (Golden hamster).